A 403-amino-acid polypeptide reads, in one-letter code: 26S proteasome regulatory subunit 8 (403 aa).

Residue 186-193 (GPPGTGKT) participates in ATP binding.

This sequence belongs to the AAA ATPase family.

The protein resides in the cytoplasm. It localises to the nucleus. Its function is as follows. The 26S proteasome is involved in the ATP-dependent degradation of ubiquitinated proteins. The regulatory (or ATPase) complex confers ATP dependency and substrate specificity to the 26S complex. The chain is 26S proteasome regulatory subunit 8 (psmC5) from Dictyostelium discoideum (Social amoeba).